The chain runs to 288 residues: Putative hydrolase LipZ (288 aa).

It belongs to the AB hydrolase superfamily.

In Mycobacterium tuberculosis (strain CDC 1551 / Oshkosh), this protein is Putative hydrolase LipZ.